The chain runs to 368 residues: Putative zinc metalloprotease Cj1068 (368 aa).

H36 contributes to the Zn(2+) binding site. E37 is an active-site residue. H40 lines the Zn(2+) pocket. Helical transmembrane passes span 112–134 (IYIL…IIIG), 291–313 (FTLL…LLPI), and 338–360 (TFEY…ATYN). The region spanning 126 to 197 (AFFLYIIIGN…LKILINREGK (72 aa)) is the PDZ domain.

It belongs to the peptidase M50B family. Zn(2+) serves as cofactor.

The protein localises to the cell inner membrane. In Campylobacter jejuni subsp. jejuni serotype O:2 (strain ATCC 700819 / NCTC 11168), this protein is Putative zinc metalloprotease Cj1068.